We begin with the raw amino-acid sequence, 1968 residues long: Signal element on autosome protein 2 (1968 aa).

The segment covering 72–88 (TSSSFSSSLATTTTTSS) has biased composition (low complexity). Disordered stretches follow at residues 72–252 (TSSS…TPTQ) and 271–364 (QVQQ…VQEQ). The segment covering 107 to 119 (SHHHPSSSHHHHP) has biased composition (basic residues). Low complexity-rich tracts occupy residues 120–134 (GQQQ…SHLQ), 144–165 (HPYY…YGQA), 219–232 (DQPS…LPPL), and 298–338 (LSSI…SSSS). A compositionally biased stretch (polar residues) spans 346–362 (PNASSSSLIKRQSQDVQ). The segment at 413–440 (YQCPNCNRNLANARNLQRHRQTCGSAQH) adopts a C2H2-type 1 zinc-finger fold. 2 disordered regions span residues 451–499 (RSPP…LYSP) and 538–601 (WSRD…TLDP). The segment covering 452–467 (SPPPCASAPPVAPPTA) has biased composition (pro residues). Positions 472–482 (FQHHNSTGNLT) are enriched in polar residues. The span at 483–498 (LSYSSSSSRHQSSLYS) shows a compositional bias: low complexity. Over residues 570-594 (PLHHLDSFDSADHRKETPRECHEPD) the composition is skewed to basic and acidic residues. The C2H2-type 2; degenerate zinc finger occupies 651–672 (FTCEACKKSVSSERSLRRHYNT). Disordered stretches follow at residues 681–712 (AASG…GPEK) and 785–854 (VTSA…TGNP). The segment covering 690-702 (TTKRKPATKRPSK) has biased composition (basic residues). Over residues 794-804 (HQLPHQQPQQQ) the composition is skewed to low complexity. The span at 812–824 (LLNEQDESADDDG) shows a compositional bias: acidic residues. Over residues 827 to 851 (RSSSGTVSNSTTTTTTATTTSSKST) the composition is skewed to low complexity. The C2H2-type 3; degenerate zinc finger occupies 856 to 875 (FTCEHCARQLCSMSNLKRHR). Disordered stretches follow at residues 882–905 (ASSS…TAPA), 975–1069 (GDAL…EHKN), 1083–1227 (RMDA…SPLD), and 1246–1273 (PGPL…SQQA). Low complexity-rich tracts occupy residues 981 to 1015 (QQHQ…AGRI), 1023 to 1046 (ILNQ…MLNP), and 1108 to 1131 (PQRS…YQVQ). Residues 1136-1146 (PLPPMQLPPLQ) show a composition bias toward pro residues. Residues 1147–1185 (NPHNQQQQHQMLHQSQMNYQQVQQVQQVQHVQQQQNLQN) show a composition bias toward low complexity. Polar residues-rich tracts occupy residues 1201-1211 (APGNRSRSHSN) and 1251-1273 (QGQS…SQQA). The segment at 1274 to 1297 (YICPECKKTYASRKNVKRHRMAVH) adopts a C2H2-type 4 zinc-finger fold. Disordered regions lie at residues 1333-1478 (TPDS…ADEE), 1569-1608 (SVGL…QQQQ), 1624-1671 (HPPM…LTCS), and 1769-1822 (ADRQ…PSTN). Over residues 1388-1403 (ERQEPPKKPVADDHKS) the composition is skewed to basic and acidic residues. 2 stretches are compositionally biased toward pro residues: residues 1407–1421 (PLPP…PPPY) and 1429–1445 (LNPP…PPLQ). Residues 1589–1608 (QHPQQHPQQHPQQHPQQQQQ) are compositionally biased toward low complexity. The span at 1624-1633 (HPPMPVSQQF) shows a compositional bias: polar residues. The segment at 1668–1694 (LTCSGCKKILGSDYSLRRHRAGCADVQ) adopts a C2H2-type 5; degenerate zinc-finger fold. Residues 1800-1811 (SSSSSSSTSSAS) show a composition bias toward low complexity. The C2H2-type 6 zinc-finger motif lies at 1826-1858 (HYCQFPECGKNFSSEWNLARHTRESCKMTTRAH).

As to expression, expressed in seam cells, intestine cells, pharyngeal muscles and nerve ring neurons.

It is found in the nucleus. The protein resides in the cytoplasm. In terms of biological role, RNA-binding protein, which regulates the expression of proteins required to control developmental timing of events during the L2 to L3 larval stage switch. Binds to the 3'UTR of the transcript of the heterochronic protein lin-28 to post-transcriptionally negatively regulate its expression in certain tissue types in the later larval stages. During larval development, controls the timing of seam cell division and terminal differentiation into adult alae. In vitro, it can also bind to DNA through its first zinc finger. May bind directly or indirectly to the promoter of the sex-determining factor xol-1 to activate its transcription. Its activation of xol-1 transcription controls sex determination and X chromosome dosage compensation to promote male development. Through the negative regulation of lin-28 transcript, it also has a role in the fox-1-sex-1-mediated determination of sexual fate. Acts in the intestine to play a role in regulating adult lifespan. This Caenorhabditis elegans protein is Signal element on autosome protein 2.